Consider the following 116-residue polypeptide: Large ribosomal subunit protein bL19 (116 aa).

The protein belongs to the bacterial ribosomal protein bL19 family.

Functionally, this protein is located at the 30S-50S ribosomal subunit interface and may play a role in the structure and function of the aminoacyl-tRNA binding site. This chain is Large ribosomal subunit protein bL19, found in Pseudomonas entomophila (strain L48).